The chain runs to 393 residues: S-adenosylmethionine synthase (393 aa).

Position 17 (histidine 17) interacts with ATP. Aspartate 19 is a binding site for Mg(2+). A K(+)-binding site is contributed by glutamate 45. Glutamate 58 and glutamine 106 together coordinate L-methionine. Positions 106–116 (QSAHIAQGVNA) are flexible loop. Residues 171 to 173 (DAK), 237 to 238 (KF), aspartate 246, 252 to 253 (RK), alanine 269, and lysine 273 each bind ATP. Residue aspartate 246 coordinates L-methionine. Lysine 277 contributes to the L-methionine binding site.

The protein belongs to the AdoMet synthase family. As to quaternary structure, homotetramer; dimer of dimers. It depends on Mg(2+) as a cofactor. The cofactor is K(+).

Its subcellular location is the cytoplasm. The enzyme catalyses L-methionine + ATP + H2O = S-adenosyl-L-methionine + phosphate + diphosphate. It functions in the pathway amino-acid biosynthesis; S-adenosyl-L-methionine biosynthesis; S-adenosyl-L-methionine from L-methionine: step 1/1. In terms of biological role, catalyzes the formation of S-adenosylmethionine (AdoMet) from methionine and ATP. The overall synthetic reaction is composed of two sequential steps, AdoMet formation and the subsequent tripolyphosphate hydrolysis which occurs prior to release of AdoMet from the enzyme. In Ruegeria pomeroyi (strain ATCC 700808 / DSM 15171 / DSS-3) (Silicibacter pomeroyi), this protein is S-adenosylmethionine synthase.